The sequence spans 509 residues: Cytochrome P450 monooxygenase traB (509 aa).

The chain crosses the membrane as a helical span at residues 8 to 28 (LVELVSITGGLIVLFIAYTGF). Residue cysteine 453 participates in heme binding.

This sequence belongs to the cytochrome P450 family. Heme serves as cofactor.

The protein resides in the membrane. It functions in the pathway secondary metabolite biosynthesis. Cytochrome P450 monooxygenase; part of the tra gene cluster that produces terrestric acid. The clavatol biosynthesis cluster cla and the terrestric acid cluster tra are both involved in the production of peniphenones and penilactones. The non-reducing PKS claF is responsible for the formation of clavatol from successive condensations of 3 malonyl-CoA units, presumably with a simple acetyl-CoA starter unit, and 2 methylation steps. The esterase claE probably collaborates with claF by catalyzing the hydrolysis of ACP-bound acyl intermediates to free the ACP from stalled intermediates. The clavatol oxidase claD then converts clavatol to hydroxyclavatol. Spontaneous dehydration of hydroxyclavatol leads to the accumulation of the highly active ortho-quinone methide. On the other hand, the PKS-NRPS hybrid traA is involved in the formation of crustosic acid, with the help of traB and traD. The polyketide synthase module (PKS) of traA is responsible for the synthesis of the polyketide backbone via the condensation of an acetyl-CoA starter unit with 3 malonyl-CoA units. The downstream nonribosomal peptide synthetase (NRPS) module then amidates the carboxyl end of the polyketide with L-malic acid. Because traA lacks a designated enoylreductase (ER) domain, the required activity is provided the enoyl reductase traG. Crustosic acid undergoes decarboxylation and isomerization to the terrestric acid, catalyzed by the 2-oxoglutarate-dependent dioxygenase traH. Both acids are further converted to the 2 gamma-butyrolactones (R)-5-methyltetronic acid and (S)-5-carboxylmethyltetronic acid, with involvement of the cytochrome P450 monooxygenase claJ. Spontaneous addition of the methide to these gamma-butyrolactones leads to peniphenone D and penilactone D, which undergo again stereospecific attacking by methide to give penilactones A and B. This is Cytochrome P450 monooxygenase traB from Penicillium crustosum (Blue mold fungus).